Consider the following 319-residue polypeptide: Acetyl-coenzyme A carboxylase carboxyl transferase subunit alpha (319 aa).

One can recognise a CoA carboxyltransferase C-terminal domain in the interval 35–296; sequence NIDEEVHRLR…KAQLLADLAD (262 aa).

This sequence belongs to the AccA family. As to quaternary structure, acetyl-CoA carboxylase is a heterohexamer composed of biotin carboxyl carrier protein (AccB), biotin carboxylase (AccC) and two subunits each of ACCase subunit alpha (AccA) and ACCase subunit beta (AccD).

The protein resides in the cytoplasm. It catalyses the reaction N(6)-carboxybiotinyl-L-lysyl-[protein] + acetyl-CoA = N(6)-biotinyl-L-lysyl-[protein] + malonyl-CoA. The protein operates within lipid metabolism; malonyl-CoA biosynthesis; malonyl-CoA from acetyl-CoA: step 1/1. Its function is as follows. Component of the acetyl coenzyme A carboxylase (ACC) complex. First, biotin carboxylase catalyzes the carboxylation of biotin on its carrier protein (BCCP) and then the CO(2) group is transferred by the carboxyltransferase to acetyl-CoA to form malonyl-CoA. This chain is Acetyl-coenzyme A carboxylase carboxyl transferase subunit alpha, found in Citrobacter koseri (strain ATCC BAA-895 / CDC 4225-83 / SGSC4696).